A 340-amino-acid chain; its full sequence is Ferrochelatase (340 aa).

Fe cation-binding residues include His189 and Glu292.

It belongs to the ferrochelatase family.

It is found in the cytoplasm. It carries out the reaction heme b + 2 H(+) = protoporphyrin IX + Fe(2+). The protein operates within porphyrin-containing compound metabolism; protoheme biosynthesis; protoheme from protoporphyrin-IX: step 1/1. Functionally, catalyzes the ferrous insertion into protoporphyrin IX. The polypeptide is Ferrochelatase (Ectopseudomonas mendocina (strain ymp) (Pseudomonas mendocina)).